A 293-amino-acid polypeptide reads, in one-letter code: 4-hydroxybenzoate octaprenyltransferase (293 aa).

The next 7 membrane-spanning stretches (helical) occupy residues 25 to 45 (IGNFLLLWPMLWGLWIAAKGL), 48 to 68 (LKVLVVFVLGVLIMRAAGCVI), 101 to 121 (LFVVLCLVAFGLVLLMNPLTI), 142 to 162 (HFPQVHLGAAFGWAIPMAFAA), 165 to 185 (GAVAPVAWLLFLSAVLWATIY), 223 to 243 (VMLAVLVAAGLVVGLGAFWYL), and 271 to 291 (FLNNNWLGGLIFLGLLLDLHL).

Belongs to the UbiA prenyltransferase family. It depends on Mg(2+) as a cofactor.

It is found in the cell inner membrane. It catalyses the reaction all-trans-octaprenyl diphosphate + 4-hydroxybenzoate = 4-hydroxy-3-(all-trans-octaprenyl)benzoate + diphosphate. Its pathway is cofactor biosynthesis; ubiquinone biosynthesis. Catalyzes the prenylation of para-hydroxybenzoate (PHB) with an all-trans polyprenyl group. Mediates the second step in the final reaction sequence of ubiquinone-8 (UQ-8) biosynthesis, which is the condensation of the polyisoprenoid side chain with PHB, generating the first membrane-bound Q intermediate 3-octaprenyl-4-hydroxybenzoate. The protein is 4-hydroxybenzoate octaprenyltransferase of Alkalilimnicola ehrlichii (strain ATCC BAA-1101 / DSM 17681 / MLHE-1).